A 131-amino-acid chain; its full sequence is Small ribosomal subunit protein uS11 (131 aa).

It belongs to the universal ribosomal protein uS11 family. Part of the 30S ribosomal subunit. Interacts with proteins S7 and S18. Binds to IF-3.

Located on the platform of the 30S subunit, it bridges several disparate RNA helices of the 16S rRNA. Forms part of the Shine-Dalgarno cleft in the 70S ribosome. This is Small ribosomal subunit protein uS11 from Chromobacterium violaceum (strain ATCC 12472 / DSM 30191 / JCM 1249 / CCUG 213 / NBRC 12614 / NCIMB 9131 / NCTC 9757 / MK).